We begin with the raw amino-acid sequence, 474 residues long: Cbb3-type cytochrome c oxidase subunit CcoN1 (474 aa).

Topologically, residues 1–16 (MNTATSTAYSYKVVRQ) are cytoplasmic. The helical transmembrane segment at 17-37 (FAIMTVVWGIVGMGLGVFIAA) threads the bilayer. Residues 38–60 (QLAWPFLNFDLPWTSFGRLRPLH) lie on the Periplasmic side of the membrane. Histidine 60 contributes to the heme b binding site. Residues 61–81 (TNAVIFAFGGCALFATSYYSV) form a helical membrane-spanning segment. The Cytoplasmic portion of the chain corresponds to 82 to 96 (QRTCQTTLFAPKLAA). Residues 97-117 (FTFWGWQLVILLAAISLPLGF) form a helical membrane-spanning segment. Residues 118-129 (TSSKEYAELEWP) lie on the Periplasmic side of the membrane. The helical transmembrane segment at 130–150 (IDILITIVWVAYAVVFFGTLA) threads the bilayer. Over 151–156 (KRKVKH) the chain is Cytoplasmic. Residues 157–177 (IYVGNWFFGAFILTVAILHVV) traverse the membrane as a helical segment. At 178–205 (NNLEIPVTAMKSYSLYAGATDAMVQWWY) the chain is on the periplasmic side. The helical transmembrane segment at 206 to 226 (GHNAVGFFLTAGFLGIMYYFV) threads the bilayer. Histidine 207 contacts Cu cation. Topologically, residues 227-238 (PKQAERPVYSYR) are cytoplasmic. Residues 239 to 259 (LSIVHFWALITVYIWAGPHHL) traverse the membrane as a helical segment. Residues histidine 257 and histidine 258 each coordinate Cu cation. The Periplasmic portion of the chain corresponds to 260 to 270 (HYTALPDWAQS). The chain crosses the membrane as a helical span at residues 271–291 (LGMVMSLILLAPSWGGMINGM). Over 292–308 (MTLSGAWHKLRSDPILR) the chain is Cytoplasmic. The chain crosses the membrane as a helical span at residues 309 to 329 (FLVVSLAFYGMSTFEGPMMAI). At 330–345 (KTVNALSHYTDWTIGH) the chain is on the periplasmic side. Positions 345 and 347 each coordinate heme b. The chain crosses the membrane as a helical span at residues 346-366 (VHAGALGWVAMVSIGALYHLV). Topologically, residues 367–384 (PKVFGREQMHSIGLINTH) are cytoplasmic. Residues 385-405 (FWLATIGTVLYIASMWVNGIA) form a helical membrane-spanning segment. Topologically, residues 406–432 (QGLMWRAINDDGTLTYSFVESLEASHP) are periplasmic. Residues 433 to 453 (GFVVRMIGGAIFFAGMLVMAY) traverse the membrane as a helical segment. Residues 454-474 (NTWRTVQAAKPAEYDAAAQIA) lie on the Cytoplasmic side of the membrane.

This sequence belongs to the heme-copper respiratory oxidase family. In terms of assembly, component of the cbb3-type cytochrome c oxidase at least composed of CcoN, CcoO, CcoQ and CcoP. Requires Cu(2+) as cofactor. Heme b is required as a cofactor.

It is found in the cell inner membrane. The catalysed reaction is 4 Fe(II)-[cytochrome c] + O2 + 8 H(+)(in) = 4 Fe(III)-[cytochrome c] + 2 H2O + 4 H(+)(out). Its pathway is energy metabolism; oxidative phosphorylation. Cbb3-type cytochrome c oxidase is the component of the respiratory chain that catalyzes the reduction of oxygen to water. Subunits CcoN and CcoO form the functional core of the enzyme complex. Subunits CcoP and CcoQ may optionally bind to the core. CcoN is the catalytic subunit of the enzyme. Electrons originating in cytochrome c or a quinol are transferred to the bimetallic center formed by a high-spin heme and copper B. The complex also functions as a proton pump. This chain is Cbb3-type cytochrome c oxidase subunit CcoN1, found in Stutzerimonas stutzeri (Pseudomonas stutzeri).